Consider the following 823-residue polypeptide: DNA ligase (823 aa).

Residues 32–36 (DAEYD), 81–82 (SL), and Glu-121 each bind NAD(+). Lys-123 functions as the N6-AMP-lysine intermediate in the catalytic mechanism. Positions 144, 181, 299, and 323 each coordinate NAD(+). Positions 449, 452, 467, and 473 each coordinate Zn(2+). Residues 528-558 (ETADKGSSENENGDAETVSGDLSKYNTQNGK) are disordered. Positions 746–823 (GINKAVAGKT…SEAELLTLLC (78 aa)) constitute a BRCT domain.

This sequence belongs to the NAD-dependent DNA ligase family. LigA subfamily. Mg(2+) serves as cofactor. Mn(2+) is required as a cofactor.

It carries out the reaction NAD(+) + (deoxyribonucleotide)n-3'-hydroxyl + 5'-phospho-(deoxyribonucleotide)m = (deoxyribonucleotide)n+m + AMP + beta-nicotinamide D-nucleotide.. Its function is as follows. DNA ligase that catalyzes the formation of phosphodiester linkages between 5'-phosphoryl and 3'-hydroxyl groups in double-stranded DNA using NAD as a coenzyme and as the energy source for the reaction. It is essential for DNA replication and repair of damaged DNA. The sequence is that of DNA ligase from Neisseria gonorrhoeae (strain NCCP11945).